The chain runs to 466 residues: Adenosylhomocysteinase (466 aa).

Substrate-binding residues include Thr-57, Asp-132, and Glu-192. Position 193–195 (Thr-193–Thr-195) interacts with NAD(+). Residues Lys-222 and Asp-226 each coordinate substrate. Residues Asn-227, Gly-256 to Gly-261, Glu-279, Asn-314, Ile-335 to His-337, and Asn-380 each bind NAD(+).

Belongs to the adenosylhomocysteinase family. NAD(+) serves as cofactor.

The protein localises to the cytoplasm. It catalyses the reaction S-adenosyl-L-homocysteine + H2O = L-homocysteine + adenosine. It participates in amino-acid biosynthesis; L-homocysteine biosynthesis; L-homocysteine from S-adenosyl-L-homocysteine: step 1/1. Functionally, may play a key role in the regulation of the intracellular concentration of adenosylhomocysteine. This chain is Adenosylhomocysteinase, found in Rhizobium rhizogenes (strain K84 / ATCC BAA-868) (Agrobacterium radiobacter).